The chain runs to 602 residues: SAGA complex subunit SPT8 (602 aa).

A disordered region spans residues 1–141; that stretch reads MDEVDDILIN…REASSSTHEA (141 aa). Composition is skewed to acidic residues over residues 14 to 23 and 36 to 75; these read VDDEEDDEEM and EGND…DGED. A Phosphothreonine modification is found at threonine 85. Phosphoserine is present on residues serine 108, serine 123, and serine 131. 2 WD repeats span residues 173 to 212 and 305 to 346; these read PIQT…EGKL and GHTQ…NEFK. Residues 366–418 are disordered; the sequence is VSGNVNSGKENENADDDMDSLFGDEDEDEKQDAGNEPVETGDGSNGEENKEQI. Positions 378 to 395 are enriched in acidic residues; the sequence is NADDDMDSLFGDEDEDEK. 3 WD repeats span residues 415 to 454, 506 to 544, and 560 to 600; these read KEQI…SPAL, SISG…DASN, and HHGG…YDID. The residue at position 451 (serine 451) is a Phosphoserine.

It belongs to the WD repeat SPT8 family. Component of the 1.8 MDa SAGA (Spt-Ada-Gcn5 acetyltransferase) complex, which is composed of 19 subunits TRA1, SPT7, TAF5, NGG1/ADA3, SGF73, SPT20/ADA5, SPT8, TAF12, TAF6, HFI1/ADA1, UBP8, GCN5, ADA2, SPT3, SGF29, TAF10, TAF9, SGF11 and SUS1. The SAGA complex is composed of 4 modules, namely the HAT (histone acetyltransferase) module (GCN5, ADA2, NGG1/ADA3 and SGF29), the DUB (deubiquitinating) module (UBP8, SGF11, SGF73 and SUS1), the core or TAF (TBP-associated factor) module (TAF5, TAF6, TAF9, TAF10 and TAF12), and the Tra1 or SPT (Suppressor of Ty) module (TRA1, HFI1/ADA1, SPT3, SPT7, SPT8 and SPT20/ADA5). The Tra1/SPT module binds activators, the core module recruits TBP (TATA-binding protein), the HAT module contains the histone H3 acetyltransferase GCN5, and the DUB module comprises the histone H2B deubiquitinase UBP8.

Its subcellular location is the nucleus. In terms of biological role, component of the transcription coactivator SAGA complex. SAGA acts as a general cofactor required for essentially all RNA polymerase II transcription. At the promoters, SAGA is required for transcription pre-initiation complex (PIC) recruitment. It influences RNA polymerase II transcriptional activity through different activities such as TBP interaction (via core/TAF module) and promoter selectivity, interaction with transcription activators (via Tra1/SPT module), and chromatin modification through histone acetylation (via HAT module) and deubiquitination (via DUB module). SAGA preferentially acetylates histones H3 (to form H3K9ac, H3K14ac, H3K18ac and H3K23ac) and H2B and deubiquitinates histone H2B. SAGA interacts with DNA via upstream activating sequences (UASs). During SAGA-mediated transcriptional inhibition, SPT3 and SPT8 prevent binding of TBP to the TATA box. The sequence is that of SAGA complex subunit SPT8 (SPT8) from Saccharomyces cerevisiae (strain ATCC 204508 / S288c) (Baker's yeast).